The sequence spans 233 residues: Probable transglycosylase IsaA (233 aa).

The N-terminal stretch at 1 to 29 (MKKTIMASSLAVALGVTGYAAGTGHQAHA) is a signal peptide.

The protein belongs to the transglycosylase family. IsaA subfamily.

It is found in the secreted. Functionally, is able to cleave peptidoglycan. This chain is Probable transglycosylase IsaA (isaA), found in Staphylococcus aureus (strain USA300).